A 91-amino-acid chain; its full sequence is Small ribosomal subunit protein uS19 (91 aa).

The protein belongs to the universal ribosomal protein uS19 family.

In terms of biological role, protein S19 forms a complex with S13 that binds strongly to the 16S ribosomal RNA. The polypeptide is Small ribosomal subunit protein uS19 (Methylibium petroleiphilum (strain ATCC BAA-1232 / LMG 22953 / PM1)).